The chain runs to 459 residues: Argininosuccinate lyase (459 aa).

The protein belongs to the lyase 1 family. Argininosuccinate lyase subfamily.

It localises to the cytoplasm. It carries out the reaction 2-(N(omega)-L-arginino)succinate = fumarate + L-arginine. Its pathway is amino-acid biosynthesis; L-arginine biosynthesis; L-arginine from L-ornithine and carbamoyl phosphate: step 3/3. The protein is Argininosuccinate lyase of Buchnera aphidicola subsp. Schizaphis graminum (strain Sg).